An 89-amino-acid chain; its full sequence is NADH-ubiquinone oxidoreductase chain 4L (89 aa).

3 helical membrane passes run 1–21 (MNFSIFLFLIGILGFVLNRKN), 22–42 (IILMLISIEIMLLSITFLILI), and 55–75 (FAVYIITVAGAESAIGLGILV).

The protein belongs to the complex I subunit 4L family.

The protein localises to the mitochondrion membrane. It catalyses the reaction a ubiquinone + NADH + 5 H(+)(in) = a ubiquinol + NAD(+) + 4 H(+)(out). Its function is as follows. Core subunit of the mitochondrial membrane respiratory chain NADH dehydrogenase (Complex I) that is believed to belong to the minimal assembly required for catalysis. Complex I functions in the transfer of electrons from NADH to the respiratory chain. The immediate electron acceptor for the enzyme is believed to be ubiquinone. In Aspergillus niger, this protein is NADH-ubiquinone oxidoreductase chain 4L (nd4L).